We begin with the raw amino-acid sequence, 255 residues long: MMHDDPNEAGLPPHDDAIPDEAAEGADAVNPLHHRRIRSFVTRAGRVSTGQRRAMDELGPRFVVPYAPELPDWNAVFGRSAPRILEIGFGMGASTAEIAANRPGDDFLGVEVHEPGVGALLKLIGEQDLSNIRIIQHDAVEVLEHMLAPESLDGVHIFFPDPWHKARHHKRRLIQPPLVAHLVSRLKPGAYIHCATDWQNYAEQMLEVLGAEPTLENTAADYAPRPDYRPVTKFERRGLRLGHGVWDLVFRKRAA.

Residues 1-21 (MMHDDPNEAGLPPHDDAIPDE) are disordered. S-adenosyl-L-methionine is bound by residues Glu-86, Glu-111, Asp-138, and Asp-161. The active site involves Asp-161. Substrate-binding positions include Lys-165, Asp-197, and 232–235 (TKFE).

Belongs to the class I-like SAM-binding methyltransferase superfamily. TrmB family.

The catalysed reaction is guanosine(46) in tRNA + S-adenosyl-L-methionine = N(7)-methylguanosine(46) in tRNA + S-adenosyl-L-homocysteine. It participates in tRNA modification; N(7)-methylguanine-tRNA biosynthesis. In terms of biological role, catalyzes the formation of N(7)-methylguanine at position 46 (m7G46) in tRNA. The polypeptide is tRNA (guanine-N(7)-)-methyltransferase (Burkholderia lata (strain ATCC 17760 / DSM 23089 / LMG 22485 / NCIMB 9086 / R18194 / 383)).